A 247-amino-acid chain; its full sequence is ATP synthase subunit a, chloroplastic (247 aa).

5 helical membrane passes run 38–58, 95–115, 134–154, 199–219, and 220–240; these read QVLITSWVVIAILLGSATVAV, VPFIGTMFLFIFVSNWSGALL, INTTVALALPTSVAYFYAGLT, LVVVVLVSLVPSVVPIPVMFL, and GLFTSGIQALIFATLAAAYIG.

The protein belongs to the ATPase A chain family. In terms of assembly, F-type ATPases have 2 components, CF(1) - the catalytic core - and CF(0) - the membrane proton channel. CF(1) has five subunits: alpha(3), beta(3), gamma(1), delta(1), epsilon(1). CF(0) has four main subunits: a, b, b' and c.

The protein localises to the plastid. Its subcellular location is the chloroplast thylakoid membrane. Key component of the proton channel; it plays a direct role in the translocation of protons across the membrane. This Platanus occidentalis (Sycamore) protein is ATP synthase subunit a, chloroplastic.